A 552-amino-acid polypeptide reads, in one-letter code: Putative transport protein YPTS_4123 (552 aa).

The next 6 membrane-spanning stretches (helical) occupy residues 1–21 (MSAI…GLWI), 26–46 (IYGV…VGHF), 65–85 (FGLI…FFSS), 96–116 (FAIL…KLFA), 119–139 (LPII…LGAA), and 158–178 (MGYA…MWLI). RCK C-terminal domains follow at residues 192–276 (AFDS…VVGE) and 279–361 (DVTL…IVGN). A run of 6 helical transmembrane segments spans residues 371–391 (MLPV…PLFV), 393–413 (GFPA…ALIL), 439–459 (IVLF…NTLV), 464–484 (LAWI…VGIL), 493–513 (YLTL…LAFA), and 530–550 (VYPL…VLFW).

It belongs to the AAE transporter (TC 2.A.81) family. YidE subfamily.

It is found in the cell membrane. This Yersinia pseudotuberculosis serotype IB (strain PB1/+) protein is Putative transport protein YPTS_4123.